The chain runs to 545 residues: MAEASSLGRQSPRVVSCLEHSLCPGEPGLQTTAVVSMGSGDHQFNLAEILSQNYSVRGECEEASRCPDKPKEELEKDFISQSNDMPFDELLALYGYEASDPISDRESEGGDVAPNLPDMTLDKEQIAKDLLSGEEEEETQSSADDLTPSVTSHEASDLFPNRSGSRFLADEDREPGSSASSDTEEDSLPANKCKKEIMVGPQFQADLSNLHLNRHCEKIYENEDQLLWDPSVLPEREVEEFLYRAVKRRWHEMAGPQLPEGEAVKDSEQALYELVKCNFNVEEALRRLRFNVKVIRDGLCAWSEEECRNFEHGFRVHGKNFHLIQANKVRTRSVGECVEYYYLWKKSERYDYFAQQTRLGRRKYVPSGTTDADQDLDGSDPDGPGRPRPEQDTLTGMRTDPLSVDGTAGGLDEPGVASDGLPSSEPGPCSFQQLDESPAVPLSHRPPALADPASYQPAVTAPEPDASPRLAVDFALPKELPLISSHVDLSGDPEETVAPAQVALSVTEFGLIGIGDVNPFLAAHPTCPAPGLHSEPLSHCNVMTC.

At Ser11 the chain carries Phosphoserine. The disordered stretch occupies residues 100–189; sequence DPISDRESEG…SSDTEEDSLP (90 aa). Residues 140–153 show a composition bias toward polar residues; sequence QSSADDLTPSVTSH. The region spanning 195–292 is the ELM2 domain; it reads KEIMVGPQFQ…EALRRLRFNV (98 aa). The SANT domain occupies 297–349; it reads DGLCAWSEEECRNFEHGFRVHGKNFHLIQANKVRTRSVGECVEYYYLWKKSER. The segment at 364-464 is disordered; the sequence is YVPSGTTDAD…YQPAVTAPEP (101 aa).

In terms of assembly, part of a complex containing at least CDYL, MIER1, MIER2, HDAC1 and HDAC2.

It localises to the nucleus. In terms of biological role, transcriptional repressor. This Homo sapiens (Human) protein is Mesoderm induction early response protein 2 (MIER2).